The sequence spans 176 residues: Ribosome maturation factor RimM (176 aa).

The PRC barrel domain maps to 99–174 (KNEFYITDLI…IVLIQPEIWN (76 aa)).

It belongs to the RimM family. In terms of assembly, binds ribosomal protein uS19.

The protein localises to the cytoplasm. Its function is as follows. An accessory protein needed during the final step in the assembly of 30S ribosomal subunit, possibly for assembly of the head region. Essential for efficient processing of 16S rRNA. May be needed both before and after RbfA during the maturation of 16S rRNA. It has affinity for free ribosomal 30S subunits but not for 70S ribosomes. This is Ribosome maturation factor RimM from Leptospira interrogans serogroup Icterohaemorrhagiae serovar copenhageni (strain Fiocruz L1-130).